The primary structure comprises 151 residues: Copper transporter 2 (151 aa).

Transmembrane regions (helical) follow at residues 42–62 (GARG…AVLL) and 97–117 (VAYL…LAIV).

The protein belongs to the copper transporter (Ctr) (TC 1.A.56) family. SLC31A subfamily. In terms of assembly, self-interacts. Interacts with SWEET11 and COPT1.

It is found in the cell membrane. In terms of biological role, involved in the transport of copper, in cooperation with SWEET11 and COPT1. Contributes to the removal of copper (Cu) from xylem, and thus to the sensitivity toward bacterial pathogens such as X.oryzae pv. oryzae (Xoo). In Oryza sativa subsp. japonica (Rice), this protein is Copper transporter 2 (COPT2).